Here is a 470-residue protein sequence, read N- to C-terminus: Cysteine--tRNA ligase (470 aa).

Position 29 (C29) interacts with Zn(2+). A 'HIGH' region motif is present at residues 31 to 41 (PTVYNYAHIGN). The Zn(2+) site is built by C211, H236, and E240. The 'KMSKS' region signature appears at 273–277 (KMSKS). K276 contributes to the ATP binding site.

The protein belongs to the class-I aminoacyl-tRNA synthetase family. Monomer. Requires Zn(2+) as cofactor.

The protein localises to the cytoplasm. The catalysed reaction is tRNA(Cys) + L-cysteine + ATP = L-cysteinyl-tRNA(Cys) + AMP + diphosphate. The chain is Cysteine--tRNA ligase from Phenylobacterium zucineum (strain HLK1).